The chain runs to 223 residues: Probable transaldolase (223 aa).

Catalysis depends on lysine 86, which acts as the Schiff-base intermediate with substrate.

It belongs to the transaldolase family. Type 3B subfamily.

It localises to the cytoplasm. The enzyme catalyses D-sedoheptulose 7-phosphate + D-glyceraldehyde 3-phosphate = D-erythrose 4-phosphate + beta-D-fructose 6-phosphate. It functions in the pathway carbohydrate degradation; pentose phosphate pathway; D-glyceraldehyde 3-phosphate and beta-D-fructose 6-phosphate from D-ribose 5-phosphate and D-xylulose 5-phosphate (non-oxidative stage): step 2/3. Its function is as follows. Transaldolase is important for the balance of metabolites in the pentose-phosphate pathway. The sequence is that of Probable transaldolase (tal) from Thermoplasma acidophilum (strain ATCC 25905 / DSM 1728 / JCM 9062 / NBRC 15155 / AMRC-C165).